Reading from the N-terminus, the 285-residue chain is Pantothenate synthetase (285 aa).

32–39 (MGALHDGH) is a binding site for ATP. The Proton donor role is filled by His39. Gln63 contacts (R)-pantoate. Gln63 contacts beta-alanine. 149 to 152 (GEKD) contributes to the ATP binding site. Gln155 is a (R)-pantoate binding site. ATP is bound by residues Val178 and 186-189 (MSSR).

It belongs to the pantothenate synthetase family. As to quaternary structure, homodimer.

Its subcellular location is the cytoplasm. It carries out the reaction (R)-pantoate + beta-alanine + ATP = (R)-pantothenate + AMP + diphosphate + H(+). Its pathway is cofactor biosynthesis; (R)-pantothenate biosynthesis; (R)-pantothenate from (R)-pantoate and beta-alanine: step 1/1. Its function is as follows. Catalyzes the condensation of pantoate with beta-alanine in an ATP-dependent reaction via a pantoyl-adenylate intermediate. The polypeptide is Pantothenate synthetase (Ruegeria pomeroyi (strain ATCC 700808 / DSM 15171 / DSS-3) (Silicibacter pomeroyi)).